Consider the following 662-residue polypeptide: Polyunsaturated fatty acid lipoxygenase ALOX15 (662 aa).

The region spanning 2–114 (GLYRIRVSTG…VLSLPEGTGR (113 aa)) is the PLAT domain. Residues 115-662 (TVGEDPQGLF…PSVVENSVAI (548 aa)) enclose the Lipoxygenase domain. Positions 360, 365, 540, 544, and 662 each coordinate Fe cation.

It belongs to the lipoxygenase family. In terms of assembly, interacts with PEBP1; in response to IL13/interleukin-13, prevents the interaction of PEBP1 with RAF1 to activate the ERK signaling cascade. Requires Fe cation as cofactor. In terms of tissue distribution, detected in monocytes and eosinophils (at protein level). Expressed in airway epithelial cells.

It localises to the cytoplasm. Its subcellular location is the cytosol. The protein localises to the cell membrane. The protein resides in the lipid droplet. It carries out the reaction (5Z,8Z,11Z,14Z)-eicosatetraenoate + O2 = (12S)-hydroperoxy-(5Z,8Z,10E,14Z)-eicosatetraenoate. It catalyses the reaction (5Z,8Z,11Z,14Z)-eicosatetraenoate + O2 = (15S)-hydroperoxy-(5Z,8Z,11Z,13E)-eicosatetraenoate. The catalysed reaction is (9Z,12Z)-octadecadienoate + O2 = (13S)-hydroperoxy-(9Z,11E)-octadecadienoate. The enzyme catalyses (5Z,8Z,11Z,14Z)-eicosatetraenoate + 2 O2 = (14R,15S)-dihydroperoxy-(5Z,8Z,10E,12E)-eicosatetraenoate. It carries out the reaction (5Z,8Z,11Z,14Z)-eicosatetraenoate + 2 O2 = (8S,15S)-dihydroperoxy-(5Z,9E,11Z,13E)-eicosatetraenoate. It catalyses the reaction (14S,15R)-epoxy-(5Z,8Z,11Z)-eicosatrienoate + O2 = (8S)-hydroperoxy-(14S,15R)-epoxy-(5Z,9E,11Z)-eicosatrienoate. The catalysed reaction is (14S,15R)-epoxy-(5Z,8Z,11Z)-eicosatrienoate + O2 = (12S)-hydroperoxy-(14S,15R)-epoxy-(5Z,8Z,10E)-eicosatrienoate. The enzyme catalyses (14R,15S)-epoxy-(5Z,8Z,11Z)-eicosatrienoate + O2 = (5S)-hydroperoxy-(14R,15S)-epoxy-(6E,8Z,11Z)-eicosatrienoate. It carries out the reaction (14R,15S)-epoxy-(5Z,8Z,11Z)-eicosatrienoate + O2 = (12S)-hydroperoxy-(14R,15S)-epoxy-(5Z,8Z,10E)-eicosatrienoate. It catalyses the reaction (15R)-hydroperoxy-(5Z,8Z,11Z,13E)-eicosatetraenoate = 15-oxo-(5Z,8Z,11Z,13E)-eicosatetraenoate + H2O. The catalysed reaction is (15S)-hydroperoxy-(5Z,8Z,11Z,13E)-eicosatetraenoate = (14S,15S)-epoxy-(5Z,8Z,10E,12E)-eicosatetraenoate + H2O. The enzyme catalyses (12S)-hydroperoxy-(5Z,8Z,10E,14Z)-eicosatetraenoate = (8S)-hydroxy-(11S,12S)-epoxy-(5Z,9E,14Z)-eicosatrienoate. It carries out the reaction (4Z,7Z,10Z,13Z,16Z,19Z)-docosahexaenoate + O2 = (14S)-hydroperoxy-(4Z,7Z,10Z,12E,16Z,19Z)-docosahexaenoate. It catalyses the reaction (4Z,7Z,10Z,13Z,16Z,19Z)-docosahexaenoate + O2 = (17S)-hydroperoxy-(4Z,7Z,10Z,13Z,15E,19Z)-docosahexaenoate. The catalysed reaction is (7S)-hydroperoxy-(4Z,8E,10Z,13Z,16Z,19Z)-docosahexaenoate + O2 = (7S,14S)-dihydroperoxy-(4Z,8E,10Z,12E,16Z,19Z)-docosahexaenoate. The enzyme catalyses (7S)-hydroperoxy-(4Z,8E,10Z,13Z,16Z,19Z)-docosahexaenoate + O2 = (7S,17S)-dihydroperoxy-(4Z,8E,10Z,13Z,15E,19Z)-docosahexaenoate. It carries out the reaction (4Z,7Z,10Z,13Z,16Z,19Z)-docosahexaenoate + O2 = (11S)-hydroperoxy-(4Z,7Z,9E,13Z,16Z,19Z)-docosahexaenoate. It catalyses the reaction (7Z,10Z,13Z,16Z,19Z)-docosapentaenoate + O2 = 14-hydroperoxy-(7Z,10Z,12E,16Z,19Z)-docosapentaenoate. The catalysed reaction is (4Z,7Z,10Z,13Z,16Z)-docosapentaenoate + O2 = 14-hydroperoxy-(4Z,7Z,10Z,12E,16Z)-docosapentaenoate. The enzyme catalyses N-(5Z,8Z,11Z,14Z)-eicosatetraenoyl-taurine + O2 = N-(12S)-hydroperoxy-(5Z,8Z,10E,14Z)-eicosatetraenoyl-taurine. It carries out the reaction N-(5Z,8Z,11Z,14Z)-eicosatetraenoyl-gamma-aminobutanoate + O2 = N-(12S)-hydroperoxy-(5Z,8Z,10E,14Z)-eicosatetraenoyl-gamma-aminobutanoate. It catalyses the reaction N-(5Z,8Z,11Z,14Z)-eicosatetraenoyl-glycine + O2 = N-(12S)-hydroperoxy-(5Z,8Z,10E,14Z)-eicosatetraenoyl-glycine. The catalysed reaction is N-(5Z,8Z,11Z,14Z)-eicosatetraenoyl-L-alanine + O2 = N-(12S)-hydroperoxy-(5Z,8Z,10E,14Z)-eicosatetraenoyl-alanine. The enzyme catalyses N-(5Z,8Z,11Z,14Z)-eicosatetraenoyl-taurine + O2 = N-(15S)-hydroperoxy-(5Z,8Z,11Z,13E)-eicosatetraenoyl-taurine. It carries out the reaction N-(5Z,8Z,11Z,14Z)-eicosatetraenoyl-gamma-aminobutanoate + O2 = N-(15S)-hydroperoxy-(5Z,8Z,11Z,13E)-eicosatetraenoyl-gamma-aminobutanoate. It catalyses the reaction N-(5Z,8Z,11Z,14Z)-eicosatetraenoyl-glycine + O2 = N-(15S)-hydroperoxy-(5Z,8Z,11Z,13E)-eicosatetraenoyl-glycine. The catalysed reaction is N-(5Z,8Z,11Z,14Z)-eicosatetraenoyl-L-alanine + O2 = N-(15S)-hydroperoxy-(5Z,8Z,11Z,13E)-eicosatetraenoyl-alanine. The protein operates within lipid metabolism; hydroperoxy eicosatetraenoic acid biosynthesis. With respect to regulation, activity is increased by binding phosphatidylinositol phosphates, especially phosphatidylinositol 3,4-bisphosphate and phosphatidylinositol 4,5-bisphosphate. Inactivated at 37 degrees Celsius by (13S)-hydroperoxy-(9Z,11E)-octadecadienoate. Non-heme iron-containing dioxygenase that catalyzes the stereo-specific peroxidation of free and esterified polyunsaturated fatty acids generating a spectrum of bioactive lipid mediators. It inserts peroxyl groups at C12 or C15 of arachidonate ((5Z,8Z,11Z,14Z)-eicosatetraenoate) producing both 12-hydroperoxyeicosatetraenoate/12-HPETE and 15-hydroperoxyeicosatetraenoate/15-HPETE. It may then act on 12-HPETE to produce hepoxilins, which may show pro-inflammatory properties. Can also peroxidize linoleate ((9Z,12Z)-octadecadienoate) to 13-hydroperoxyoctadecadienoate/13-HPODE. May participate in the sequential oxidations of DHA ((4Z,7Z,10Z,13Z,16Z,19Z)-docosahexaenoate) to generate specialized pro-resolving mediators (SPMs)like resolvin D5 ((7S,17S)-diHPDHA) and (7S,14S)-diHPDHA, that actively down-regulate the immune response and have anti-aggregation properties with platelets. Can convert epoxy fatty acids to hydroperoxy-epoxides derivatives followed by an intramolecular nucleophilic substitution leading to the formation of monocyclic endoperoxides. Plays an important role during the maintenance of self-tolerance by peroxidizing membrane-bound phosphatidylethanolamine which can then signal the sorting process for clearance of apoptotic cells during inflammation and prevent an autoimmune response. In addition to its role in the immune and inflammatory responses, this enzyme may play a role in epithelial wound healing in the cornea through production of lipoxin A4 (LXA(4)) and docosahexaenoic acid-derived neuroprotectin D1 (NPD1; 10R,17S-HDHA), both lipid autacoids exhibit anti-inflammatory and neuroprotective properties. Furthermore, it may regulate actin polymerization which is crucial for several biological processes such as the phagocytosis of apoptotic cells. It is also implicated in the generation of endogenous ligands for peroxisome proliferator activated receptor (PPAR-gamma), hence modulating macrophage development and function. It may also exert a negative effect on skeletal development by regulating bone mass through this pathway. As well as participates in ER stress and downstream inflammation in adipocytes, pancreatic islets, and liver. Finally, it is also involved in the cellular response to IL13/interleukin-13. The sequence is that of Polyunsaturated fatty acid lipoxygenase ALOX15 from Homo sapiens (Human).